Consider the following 412-residue polypeptide: Multifunctional CCA protein (412 aa).

Residues Gly8 and Arg11 each coordinate ATP. The CTP site is built by Gly8 and Arg11. Positions 21 and 23 each coordinate Mg(2+). Arg91, Arg137, and Arg140 together coordinate ATP. Arg91, Arg137, and Arg140 together coordinate CTP. Residues 228 to 329 (TGIHTLMTLS…VKLFDSIDAW (102 aa)) form the HD domain.

The protein belongs to the tRNA nucleotidyltransferase/poly(A) polymerase family. Bacterial CCA-adding enzyme type 1 subfamily. In terms of assembly, monomer. Can also form homodimers and oligomers. The cofactor is Mg(2+). Ni(2+) serves as cofactor.

The enzyme catalyses a tRNA precursor + 2 CTP + ATP = a tRNA with a 3' CCA end + 3 diphosphate. It catalyses the reaction a tRNA with a 3' CCA end + 2 CTP + ATP = a tRNA with a 3' CCACCA end + 3 diphosphate. Functionally, catalyzes the addition and repair of the essential 3'-terminal CCA sequence in tRNAs without using a nucleic acid template. Adds these three nucleotides in the order of C, C, and A to the tRNA nucleotide-73, using CTP and ATP as substrates and producing inorganic pyrophosphate. tRNA 3'-terminal CCA addition is required both for tRNA processing and repair. Also involved in tRNA surveillance by mediating tandem CCA addition to generate a CCACCA at the 3' terminus of unstable tRNAs. While stable tRNAs receive only 3'-terminal CCA, unstable tRNAs are marked with CCACCA and rapidly degraded. This chain is Multifunctional CCA protein, found in Escherichia coli (strain SE11).